The sequence spans 249 residues: Olfactory receptor 1571 (249 aa).

A helical membrane pass occupies residues 1 to 9 (LLMCNLCFA). Residues 10–40 (DICFTSASIPTNLVNIQTKNKVITYEGCISQ) are Extracellular-facing. Residues cysteine 37 and cysteine 119 are joined by a disulfide bond. The chain crosses the membrane as a helical span at residues 41–60 (VYFFILFGVLDNFLLAVMAY). Residues 61-82 (DRYVAICHPLHYTVIMNRRLCG) are Cytoplasmic-facing. A helical transmembrane segment spans residues 83–103 (LLVLGSWVTTALNSLLQSSMA). At 104 to 136 (LRLSFCTDLKIPHFVCELNQLVLLACNDTFPND) the chain is on the extracellular side. An N-linked (GlcNAc...) asparagine glycan is attached at asparagine 130. A helical transmembrane segment spans residues 137–158 (MVMYFAAVLLGGGPLAGILYSY). The Cytoplasmic portion of the chain corresponds to 159 to 180 (SKIVSSIRAISSSQGKYKAFST). Residues 181 to 200 (CASHLSVVSLFYSTLLGVYL) form a helical membrane-spanning segment. The Extracellular segment spans residues 201-210 (SSSFTQNSHS). A helical transmembrane segment spans residues 211–232 (TARASVMYSVVTPMLNPFIYSL). Over 233-249 (RNKDLMGALRRLFRRKP) the chain is Cytoplasmic.

It belongs to the G-protein coupled receptor 1 family. As to expression, tongue specific.

Its subcellular location is the cell membrane. Functionally, possible taste receptor. The chain is Olfactory receptor 1571 (Olr1571) from Rattus norvegicus (Rat).